The following is a 341-amino-acid chain: Phosphate acyltransferase (341 aa).

It belongs to the PlsX family. In terms of assembly, homodimer. Probably interacts with PlsY.

The protein resides in the cytoplasm. The enzyme catalyses a fatty acyl-[ACP] + phosphate = an acyl phosphate + holo-[ACP]. Its pathway is lipid metabolism; phospholipid metabolism. Catalyzes the reversible formation of acyl-phosphate (acyl-PO(4)) from acyl-[acyl-carrier-protein] (acyl-ACP). This enzyme utilizes acyl-ACP as fatty acyl donor, but not acyl-CoA. This is Phosphate acyltransferase from Elusimicrobium minutum (strain Pei191).